The following is a 275-amino-acid chain: MKVLLGLLLGYSVLILTHELPDLSATQHPPKEELAYWCTYVKNCDFCWDCQNDICKNKITNESISINSIVNCRVTRDSIHQWCFYEISVKMPNHHNMECSLPRPYTGNEIFMEKWGGGDYWPIIIRHCCFYLVFSIAFVGYIVFAYHKNLHLNTTMKLLALLSILIWLSQPGLNRPLSIFYMKQNLPRTYTPPVRELEYWCTYGKHCHFCWECRHGICKNKVWDDMPFIKQNDYISQCSIARYFDRCMYFIKPKTPYIHYMDCSQPTAYEGFSHS.

A helical membrane pass occupies residues Leu-5–Ala-25. The N-linked (GlcNAc...) asparagine; by host glycan is linked to Asn-61. 2 consecutive transmembrane segments (helical) span residues His-127 to His-147 and Asn-149 to Ser-169.

This sequence belongs to the asfivirus MGF 110 family.

The protein resides in the host membrane. Functionally, plays a role in virus cell tropism, and may be required for efficient virus replication in macrophages. The sequence is that of Protein MGF 110-11L from African swine fever virus (isolate Pig/Kenya/KEN-50/1950) (ASFV).